The sequence spans 766 residues: MRIPLFILTFLFTFFSLATTPVSADSGVLYTDAVTYCAEAKAVIVDEFDITYHRSNGSVTFSFSLASVEPNLNTSVNLYINAYGIQIINQTLELCDLLQGVICPLPQVNFTGYGTYPIPAEYLSKIPSIAYTVPNIEAYARVQLIRVENNEVAACLQATLANGKTAHQKGVIWASAIFTLVAFLVAIWHTASGTSTSPIQYRWFDILFIFQVAAASGLLHLNYPLVYTNFVQNFHWALGLFYSSSMQSSISKMREKTGGSMDSTAYSEVQYINRKLSPYNVYMDDNGILSSPESLAAFFKESALSKRSLEHFAKRATIPSVLAQNMTTDINTGLPVYTNTLRIPEANAYDTIWFVFLALIGIFIAFHVLLFGMVLLFDRMGRNRSHLGWAARLRRMWWPFCVGNSLRLCLIGFFPIWIFAFWQFHIGDSGLSIFWAVFGILLTLVPLATAFLLSLLRARRISSTSPEINSLYTSFRYFHSIGVLYRQYRQKFHYFWFTPFVLAMIARAGFIAFGPASAWAQVIGNLVVEFIVLVALLACRPHKDKKGDWLGAFLSICRLIAIGLLIAFIPDMNVKPIPRAVIAFVIIVFYGVPVVFLFVGFLWNIGYGYLWCKHSTRVEDGLEVERFSPTSSNSSVPPPMMKNVDAATFVSSDGAAASRGSLSMGGAGASGAGLAGGAAAAGTGLGRRSSLIEPVGDNVYEASASSADGALSPPPVTAYNPYGKEEIGYPYDPQDSRLAYEQAAMGRGGVNGPGSPTDEKQWSRRY.

The N-terminal stretch at 1 to 24 (MRIPLFILTFLFTFFSLATTPVSA) is a signal peptide. Topologically, residues 25–170 (DSGVLYTDAV…ANGKTAHQKG (146 aa)) are lumenal. 4 N-linked (GlcNAc...) asparagine glycosylation sites follow: Asn56, Asn73, Asn89, and Asn109. The helical transmembrane segment at 171–191 (VIWASAIFTLVAFLVAIWHTA) threads the bilayer. Residues 192–205 (SGTSTSPIQYRWFD) lie on the Cytoplasmic side of the membrane. A helical transmembrane segment spans residues 206 to 226 (ILFIFQVAAASGLLHLNYPLV). Residues 227 to 351 (YTNFVQNFHW…RIPEANAYDT (125 aa)) are Lumenal-facing. An N-linked (GlcNAc...) asparagine glycan is attached at Asn325. A helical transmembrane segment spans residues 352-372 (IWFVFLALIGIFIAFHVLLFG). Over 373-407 (MVLLFDRMGRNRSHLGWAARLRRMWWPFCVGNSLR) the chain is Cytoplasmic. Residues 408-428 (LCLIGFFPIWIFAFWQFHIGD) form a helical membrane-spanning segment. Over 429–432 (SGLS) the chain is Lumenal. The chain crosses the membrane as a helical span at residues 433 to 453 (IFWAVFGILLTLVPLATAFLL). Residues 454 to 493 (SLLRARRISSTSPEINSLYTSFRYFHSIGVLYRQYRQKFH) are Cytoplasmic-facing. Residues 494–514 (YFWFTPFVLAMIARAGFIAFG) form a helical membrane-spanning segment. Topologically, residues 515-517 (PAS) are lumenal. The chain crosses the membrane as a helical span at residues 518 to 538 (AWAQVIGNLVVEFIVLVALLA). Residues 539-548 (CRPHKDKKGD) lie on the Cytoplasmic side of the membrane. A helical membrane pass occupies residues 549–569 (WLGAFLSICRLIAIGLLIAFI). Residues 570–580 (PDMNVKPIPRA) are Lumenal-facing. The helical transmembrane segment at 581-601 (VIAFVIIVFYGVPVVFLFVGF) threads the bilayer. The Cytoplasmic segment spans residues 602-766 (LWNIGYGYLW…TDEKQWSRRY (165 aa)). The disordered stretch occupies residues 704-766 (ASSADGALSP…TDEKQWSRRY (63 aa)). The span at 757–766 (TDEKQWSRRY) shows a compositional bias: basic and acidic residues.

It belongs to the transient receptor potential (TRP) ion channel family.

The protein resides in the endoplasmic reticulum membrane. Endoplasmic reticulum membrane flavin carrier protein that plays a crucial role in Ca(2+) signaling/homeostasis via the modulation of the calcineurin-Crz1 stress response pathway which is important for both stress responses and virulence. In Cryptococcus neoformans var. grubii serotype A (strain H99 / ATCC 208821 / CBS 10515 / FGSC 9487) (Filobasidiella neoformans var. grubii), this protein is TRP-like ion channel protein flc1.